The following is a 227-amino-acid chain: MAYPFQLGLQDATSPIMEELTNFHDHTLMIVFLISSLVLYIISLMLTTKLTHTSTMDAQEVETIWTILPAAILVLIALPSLRILYMMDEINNPVLTVKTMGHQWYWSYEYTDYEDLCFDSYMVPTNELKPGELRLLEVDNRVVLPMELPIRMLISSEDVLHSWAVPSLGLKTDAIPGRLNQATVTSNRPGLFYGQCSEICGSNHSFMPIVLEMVPLKYFESWSASMI.

Residues 1–14 (MAYPFQLGLQDATS) lie on the Mitochondrial intermembrane side of the membrane. Residues 15–45 (PIMEELTNFHDHTLMIVFLISSLVLYIISLM) traverse the membrane as a helical segment. Residues 46 to 59 (LTTKLTHTSTMDAQ) lie on the Mitochondrial matrix side of the membrane. The chain crosses the membrane as a helical span at residues 60 to 87 (EVETIWTILPAAILVLIALPSLRILYMM). At 88 to 227 (DEINNPVLTV…YFESWSASMI (140 aa)) the chain is on the mitochondrial intermembrane side. Residues His161, Cys196, Glu198, Cys200, His204, and Met207 each coordinate Cu cation. Glu198 is a binding site for Mg(2+). Phosphotyrosine is present on Tyr218.

This sequence belongs to the cytochrome c oxidase subunit 2 family. Component of the cytochrome c oxidase (complex IV, CIV), a multisubunit enzyme composed of 14 subunits. The complex is composed of a catalytic core of 3 subunits MT-CO1, MT-CO2 and MT-CO3, encoded in the mitochondrial DNA, and 11 supernumerary subunits COX4I, COX5A, COX5B, COX6A, COX6B, COX6C, COX7A, COX7B, COX7C, COX8 and NDUFA4, which are encoded in the nuclear genome. The complex exists as a monomer or a dimer and forms supercomplexes (SCs) in the inner mitochondrial membrane with NADH-ubiquinone oxidoreductase (complex I, CI) and ubiquinol-cytochrome c oxidoreductase (cytochrome b-c1 complex, complex III, CIII), resulting in different assemblies (supercomplex SCI(1)III(2)IV(1) and megacomplex MCI(2)III(2)IV(2)). Found in a complex with TMEM177, COA6, COX18, COX20, SCO1 and SCO2. Interacts with TMEM177 in a COX20-dependent manner. Interacts with COX20. Interacts with COX16. Cu cation serves as cofactor.

It localises to the mitochondrion inner membrane. The enzyme catalyses 4 Fe(II)-[cytochrome c] + O2 + 8 H(+)(in) = 4 Fe(III)-[cytochrome c] + 2 H2O + 4 H(+)(out). Component of the cytochrome c oxidase, the last enzyme in the mitochondrial electron transport chain which drives oxidative phosphorylation. The respiratory chain contains 3 multisubunit complexes succinate dehydrogenase (complex II, CII), ubiquinol-cytochrome c oxidoreductase (cytochrome b-c1 complex, complex III, CIII) and cytochrome c oxidase (complex IV, CIV), that cooperate to transfer electrons derived from NADH and succinate to molecular oxygen, creating an electrochemical gradient over the inner membrane that drives transmembrane transport and the ATP synthase. Cytochrome c oxidase is the component of the respiratory chain that catalyzes the reduction of oxygen to water. Electrons originating from reduced cytochrome c in the intermembrane space (IMS) are transferred via the dinuclear copper A center (CU(A)) of subunit 2 and heme A of subunit 1 to the active site in subunit 1, a binuclear center (BNC) formed by heme A3 and copper B (CU(B)). The BNC reduces molecular oxygen to 2 water molecules using 4 electrons from cytochrome c in the IMS and 4 protons from the mitochondrial matrix. This chain is Cytochrome c oxidase subunit 2 (MT-CO2), found in Conilurus penicillatus (Brush-tailed rabbit-rat).